A 297-amino-acid polypeptide reads, in one-letter code: 3-mercaptopyruvate sulfurtransferase (297 aa).

Alanine 2 bears the N-acetylalanine mark. One can recognise a Rhodanese 1 domain in the interval alanine 25 to serine 144. Serine 35 carries the phosphoserine modification. Position 40 is an N6-acetyllysine; alternate (lysine 40). Position 40 is an N6-succinyllysine; alternate (lysine 40). A hinge region spans residues glycine 145 to proline 160. 2 positions are modified to N6-succinyllysine: lysine 146 and lysine 164. In terms of domain architecture, Rhodanese 2 spans aspartate 174–valine 288. Residue arginine 188 participates in substrate binding. Catalysis depends on cysteine 248, which acts as the Cysteine persulfide intermediate.

As to quaternary structure, monomer (active form). Homodimer; disulfide-linked (inactive form). The N-terminus is blocked. Expressed in liver, heart, kidney and brain. Localizes to tubular epithelium in the kidney, pericentral hepatocytes in the liver, cardiac cells in the heart and neuroglial cells in the brain. Also expressed in vascular endothelium of the thoracic aorta. Weak expression in lung and thymus.

The protein localises to the cytoplasm. It is found in the mitochondrion. It localises to the synapse. Its subcellular location is the synaptosome. It carries out the reaction 2-oxo-3-sulfanylpropanoate + [thioredoxin]-dithiol = [thioredoxin]-disulfide + hydrogen sulfide + pyruvate + H(+). By oxidative stress, and thioredoxin. Under oxidative stress conditions, the catalytic cysteine site is converted to a sulfenate which inhibits the MPST enzyme activity. Reduced thioredoxin cleaves an intersubunit disulfide bond to turn on the redox switch and reactivate the enzyme. Inhibited by different oxidants, hydrogen peroxide and tetrathionate. Functionally, transfer of a sulfur ion to cyanide or to other thiol compounds. Also has weak rhodanese activity. Detoxifies cyanide and is required for thiosulfate biosynthesis. Acts as an antioxidant. In combination with cysteine aminotransferase (CAT), contributes to the catabolism of cysteine and is an important producer of hydrogen sulfide in the brain, retina and vascular endothelial cells. Hydrogen sulfide H(2)S is an important synaptic modulator, signaling molecule, smooth muscle contractor and neuroprotectant. Its production by the 3MST/CAT pathway is regulated by calcium ions. The polypeptide is 3-mercaptopyruvate sulfurtransferase (Mpst) (Rattus norvegicus (Rat)).